The primary structure comprises 101 residues: Cell cycle protein GpsB (101 aa).

A coiled-coil region spans residues 34-71 (LDMVIKDYETFNQEIEKLQQENLHLSKQLEEAVEQGKR).

Belongs to the GpsB family. Forms polymers through the coiled coil domains. Interacts with PBP1, MreC and EzrA.

It localises to the cytoplasm. Functionally, divisome component that associates with the complex late in its assembly, after the Z-ring is formed, and is dependent on DivIC and PBP2B for its recruitment to the divisome. Together with EzrA, is a key component of the system that regulates PBP1 localization during cell cycle progression. Its main role could be the removal of PBP1 from the cell pole after pole maturation is completed. Also contributes to the recruitment of PBP1 to the division complex. Not essential for septum formation. The sequence is that of Cell cycle protein GpsB from Bacillus pumilus (strain SAFR-032).